We begin with the raw amino-acid sequence, 454 residues long: Probable xylan O-acetyltransferase 9 (454 aa).

The Cytoplasmic segment spans residues 1–15 (MKAPPPPSPVAKRAR). The chain crosses the membrane as a helical; Signal-anchor for type II membrane protein span at residues 16-36 (VSPFVFLLVLFLLLFSFLYGE). Topologically, residues 37–454 (DLKELLGSQA…ELLYTKLFYP (418 aa)) are lumenal. 4 cysteine pairs are disulfide-bonded: Cys-101–Cys-152, Cys-123–Cys-188, Cys-132–Cys-435, and Cys-352–Cys-431. Residues 175–177 (GDS) carry the GDS motif motif. Ser-177 functions as the Nucleophile in the catalytic mechanism. N-linked (GlcNAc...) asparagine glycans are attached at residues Asn-219, Asn-293, and Asn-394. Asp-430 serves as the catalytic Proton donor. Positions 430–433 (DCVH) match the DXXH motif motif. His-433 (proton acceptor) is an active-site residue.

This sequence belongs to the PC-esterase family. TBL subfamily.

It localises to the golgi apparatus membrane. Probable xylan acetyltransferase required for 2-O- and 3-O-monoacetylation of xylosyl residues in xylan. Possesses extremely low activity in vitro. This chain is Probable xylan O-acetyltransferase 9, found in Oryza sativa subsp. japonica (Rice).